The chain runs to 466 residues: Tryptophan synthase beta chain 2, chloroplastic (466 aa).

Position 161 is an N6-(pyridoxal phosphate)lysine (K161).

This sequence belongs to the TrpB family. As to quaternary structure, tetramer of two alpha and two beta chains. It depends on pyridoxal 5'-phosphate as a cofactor.

It localises to the plastid. Its subcellular location is the chloroplast. It catalyses the reaction (1S,2R)-1-C-(indol-3-yl)glycerol 3-phosphate + L-serine = D-glyceraldehyde 3-phosphate + L-tryptophan + H2O. It functions in the pathway amino-acid biosynthesis; L-tryptophan biosynthesis; L-tryptophan from chorismate: step 5/5. The beta subunit is responsible for the synthesis of L-tryptophan from indole and L-serine. The chain is Tryptophan synthase beta chain 2, chloroplastic (TSB) from Camptotheca acuminata (Happy tree).